A 454-amino-acid chain; its full sequence is Bifunctional protein GlmU (454 aa).

The pyrophosphorylase stretch occupies residues 1 to 225; sequence MNIVILAAGM…VWETLGVNSK (225 aa). UDP-N-acetyl-alpha-D-glucosamine is bound by residues 6 to 9, lysine 20, glutamine 71, 76 to 77, 98 to 100, glycine 135, glutamate 150, asparagine 165, and asparagine 223; these read LAAG, GT, and YGD. Aspartate 100 contributes to the Mg(2+) binding site. Residue asparagine 223 participates in Mg(2+) binding. Residues 226-246 are linker; it reads LQLAEVERIHQGNQARRLLEA. Positions 247–454 are N-acetyltransferase; the sequence is GVTLLDPARI…WQRPVKQPKQ (208 aa). Positions 329 and 347 each coordinate UDP-N-acetyl-alpha-D-glucosamine. The active-site Proton acceptor is histidine 359. UDP-N-acetyl-alpha-D-glucosamine contacts are provided by tyrosine 362 and asparagine 373. Residues alanine 376, 382 to 383, serine 401, alanine 419, and arginine 436 each bind acetyl-CoA; that span reads NY.

In the N-terminal section; belongs to the N-acetylglucosamine-1-phosphate uridyltransferase family. This sequence in the C-terminal section; belongs to the transferase hexapeptide repeat family. Homotrimer. It depends on Mg(2+) as a cofactor.

It localises to the cytoplasm. The enzyme catalyses alpha-D-glucosamine 1-phosphate + acetyl-CoA = N-acetyl-alpha-D-glucosamine 1-phosphate + CoA + H(+). The catalysed reaction is N-acetyl-alpha-D-glucosamine 1-phosphate + UTP + H(+) = UDP-N-acetyl-alpha-D-glucosamine + diphosphate. Its pathway is nucleotide-sugar biosynthesis; UDP-N-acetyl-alpha-D-glucosamine biosynthesis; N-acetyl-alpha-D-glucosamine 1-phosphate from alpha-D-glucosamine 6-phosphate (route II): step 2/2. The protein operates within nucleotide-sugar biosynthesis; UDP-N-acetyl-alpha-D-glucosamine biosynthesis; UDP-N-acetyl-alpha-D-glucosamine from N-acetyl-alpha-D-glucosamine 1-phosphate: step 1/1. It functions in the pathway bacterial outer membrane biogenesis; LPS lipid A biosynthesis. Catalyzes the last two sequential reactions in the de novo biosynthetic pathway for UDP-N-acetylglucosamine (UDP-GlcNAc). The C-terminal domain catalyzes the transfer of acetyl group from acetyl coenzyme A to glucosamine-1-phosphate (GlcN-1-P) to produce N-acetylglucosamine-1-phosphate (GlcNAc-1-P), which is converted into UDP-GlcNAc by the transfer of uridine 5-monophosphate (from uridine 5-triphosphate), a reaction catalyzed by the N-terminal domain. This chain is Bifunctional protein GlmU, found in Cupriavidus taiwanensis (strain DSM 17343 / BCRC 17206 / CCUG 44338 / CIP 107171 / LMG 19424 / R1) (Ralstonia taiwanensis (strain LMG 19424)).